Reading from the N-terminus, the 26-residue chain is Photosystem II stability/assembly factor HCF136, chloroplastic (26 aa).

It belongs to the Ycf48 family.

The protein resides in the plastid. The protein localises to the chloroplast thylakoid lumen. Functionally, essential for photosystem II (PSII) biogenesis; required for assembly of an early intermediate in PSII assembly that includes D2 (psbD) and cytochrome b559. This is Photosystem II stability/assembly factor HCF136, chloroplastic from Populus euphratica (Euphrates poplar).